The chain runs to 159 residues: Ribosomal RNA large subunit methyltransferase H (159 aa).

S-adenosyl-L-methionine contacts are provided by residues leucine 76, glycine 108, and 127 to 132 (FSKMTF).

The protein belongs to the RNA methyltransferase RlmH family. Homodimer.

It localises to the cytoplasm. The enzyme catalyses pseudouridine(1915) in 23S rRNA + S-adenosyl-L-methionine = N(3)-methylpseudouridine(1915) in 23S rRNA + S-adenosyl-L-homocysteine + H(+). Specifically methylates the pseudouridine at position 1915 (m3Psi1915) in 23S rRNA. In Clostridium tetani (strain Massachusetts / E88), this protein is Ribosomal RNA large subunit methyltransferase H.